We begin with the raw amino-acid sequence, 176 residues long: Transcription factor E (176 aa).

The HTH TFE/IIEalpha-type domain maps to N8 to P90.

Belongs to the TFE family. As to quaternary structure, monomer. Interaction with RNA polymerase subunits RpoF and RpoE is necessary for Tfe stimulatory transcription activity. Able to interact with Tbp and RNA polymerase in the absence of DNA promoter. Interacts both with the preinitiation and elongation complexes.

In terms of biological role, transcription factor that plays a role in the activation of archaeal genes transcribed by RNA polymerase. Facilitates transcription initiation by enhancing TATA-box recognition by TATA-box-binding protein (Tbp), and transcription factor B (Tfb) and RNA polymerase recruitment. Not absolutely required for transcription in vitro, but particularly important in cases where Tbp or Tfb function is not optimal. It dynamically alters the nucleic acid-binding properties of RNA polymerases by stabilizing the initiation complex and destabilizing elongation complexes. Seems to translocate with the RNA polymerase following initiation and acts by binding to the non template strand of the transcription bubble in elongation complexes. The protein is Transcription factor E of Haloquadratum walsbyi (strain DSM 16790 / HBSQ001).